We begin with the raw amino-acid sequence, 741 residues long: uncharacterized protein (741 aa).

The stretch at 64–103 (VETLLCMLEQLTIRIEFLTKEIAQQEAAYKDIQNTQKSLV) forms a coiled coil. The span at 137–155 (FERQNRTAPLQSKVTTASL) shows a compositional bias: polar residues. Disordered stretches follow at residues 137-214 (FERQ…TGLP), 280-318 (RTYSSISSSSSPFKKKTQSHLPNRTTEVPSISKQLSKSS), and 330-364 (SVSSVTKSPSPTPQSAPRAQSASTETAQDLDFLTP). 2 stretches are compositionally biased toward low complexity: residues 161–173 (RTSMSSSPTASRT) and 197–209 (KSKSVLPPSKSLA). Positions 298–308 (SHLPNRTTEVP) are enriched in polar residues. Composition is skewed to low complexity over residues 309–318 (SISKQLSKSS) and 330–344 (SVSSVTKSPSPTPQS). Residues 346–356 (PRAQSASTETA) show a composition bias toward polar residues. Residue 499–506 (GPPGTGKT) coordinates ATP.

Belongs to the AAA ATPase family.

The protein localises to the cytoplasm. The protein resides in the nucleus. This is an uncharacterized protein from Schizosaccharomyces pombe (strain 972 / ATCC 24843) (Fission yeast).